Consider the following 282-residue polypeptide: Undecaprenyl-diphosphatase (282 aa).

5 helical membrane-spanning segments follow: residues 96-116 (WMVI…KDII), 123-143 (MWIT…AEKW), 198-218 (FLLA…DAFA), 229-249 (QLAV…AWLL), and 260-280 (FAAY…TGML).

This sequence belongs to the UppP family.

The protein resides in the cell membrane. It catalyses the reaction di-trans,octa-cis-undecaprenyl diphosphate + H2O = di-trans,octa-cis-undecaprenyl phosphate + phosphate + H(+). In terms of biological role, catalyzes the dephosphorylation of undecaprenyl diphosphate (UPP). Confers resistance to bacitracin. The sequence is that of Undecaprenyl-diphosphatase from Corynebacterium diphtheriae (strain ATCC 700971 / NCTC 13129 / Biotype gravis).